The chain runs to 609 residues: Laccase-1 (609 aa).

A signal peptide spans 1–20 (MYLSTVLFPLLALNLGLSHA). Residues 45 to 141 (VFTNGEYPGP…DGQVGAMYIR (97 aa)) enclose the Plastocyanin-like 1 domain. An N-linked (GlcNAc...) asparagine glycan is attached at asparagine 75. Positions 79, 81, 123, and 125 each coordinate Cu cation. Asparagine 257 carries N-linked (GlcNAc...) asparagine glycosylation. A Plastocyanin-like 2 domain is found at 270-372 (TPSSVEPPVI…MSVYAILSYV (103 aa)). N-linked (GlcNAc...) asparagine glycans are attached at residues asparagine 403, asparagine 443, and asparagine 486. One can recognise a Plastocyanin-like 3 domain in the interval 463 to 602 (STPLLFEPDP…MGGMALALLD (140 aa)). Cu cation is bound by residues histidine 508, histidine 511, and histidine 513. Asparagine 531 and asparagine 546 each carry an N-linked (GlcNAc...) asparagine glycan. 4 residues coordinate Cu cation: histidine 585, cysteine 586, histidine 587, and histidine 591.

This sequence belongs to the multicopper oxidase family. The cofactor is Cu cation.

The protein localises to the secreted. The catalysed reaction is 4 hydroquinone + O2 = 4 benzosemiquinone + 2 H2O. Required for the conversion of the yellow polyketide pigment synthesized by wA to the conidial green pigment. The polypeptide is Laccase-1 (yA) (Emericella nidulans (strain FGSC A4 / ATCC 38163 / CBS 112.46 / NRRL 194 / M139) (Aspergillus nidulans)).